Consider the following 71-residue polypeptide: Omega-conotoxin-like Ac6.4 (71 aa).

The N-terminal stretch at 1-22 is a signal peptide; that stretch reads MKLTCVVIVAVLLLTACQLLTA. The propeptide occupies 23 to 45; it reads DDSRGTQKHRALRSDTKLSMSTR. 3 cysteine pairs are disulfide-bonded: Cys46–Cys61, Cys53–Cys65, and Cys60–Cys70. Residue Cys70 is modified to Cysteine amide.

This sequence belongs to the conotoxin O1 superfamily. As to expression, expressed by the venom duct.

It is found in the secreted. Functionally, omega-conotoxins act at presynaptic membranes, they bind and block voltage-gated calcium channels (Cav). The sequence is that of Omega-conotoxin-like Ac6.4 from Conus achatinus (Little frog cone).